The following is a 337-amino-acid chain: DNA-directed RNA polymerase subunit alpha (337 aa).

Residues 1 to 233 form an alpha N-terminal domain (alpha-NTD) region; it reads MVREEIAEST…DLFVPFLHAE (233 aa). Residues 266–337 are alpha C-terminal domain (alpha-CTD); the sequence is GIPLKYIFID…FAVDLPKVLI (72 aa).

This sequence belongs to the RNA polymerase alpha chain family. In terms of assembly, in plastids the minimal PEP RNA polymerase catalytic core is composed of four subunits: alpha, beta, beta', and beta''. When a (nuclear-encoded) sigma factor is associated with the core the holoenzyme is formed, which can initiate transcription.

The protein resides in the plastid. It is found in the chloroplast. It catalyses the reaction RNA(n) + a ribonucleoside 5'-triphosphate = RNA(n+1) + diphosphate. DNA-dependent RNA polymerase catalyzes the transcription of DNA into RNA using the four ribonucleoside triphosphates as substrates. In Dioscorea elephantipes (Elephant's foot yam), this protein is DNA-directed RNA polymerase subunit alpha.